The chain runs to 464 residues: UDP-N-acetylmuramoylalanine--D-glutamate ligase (464 aa).

127–133 (GSNGKST) provides a ligand contact to ATP.

The protein belongs to the MurCDEF family.

The protein localises to the cytoplasm. It catalyses the reaction UDP-N-acetyl-alpha-D-muramoyl-L-alanine + D-glutamate + ATP = UDP-N-acetyl-alpha-D-muramoyl-L-alanyl-D-glutamate + ADP + phosphate + H(+). Its pathway is cell wall biogenesis; peptidoglycan biosynthesis. Functionally, cell wall formation. Catalyzes the addition of glutamate to the nucleotide precursor UDP-N-acetylmuramoyl-L-alanine (UMA). This is UDP-N-acetylmuramoylalanine--D-glutamate ligase from Roseobacter denitrificans (strain ATCC 33942 / OCh 114) (Erythrobacter sp. (strain OCh 114)).